The primary structure comprises 112 residues: Protein new-glue 2 (112 aa).

An N-terminal signal peptide occupies residues methionine 1–alanine 24. A compositionally biased stretch (low complexity) spans alanine 24 to serine 69. A disordered region spans residues alanine 24–glutamate 112. 4 repeat units span residues threonine 31–threonine 38, threonine 39–threonine 46, threonine 47–threonine 54, and threonine 55–threonine 62. Residues threonine 31–threonine 62 are 4 X 8 AA tandem repeats of T-S-A-S-A-T-T-T. The segment covering serine 70–glutamate 112 has biased composition (basic residues).

The protein to NG-1, also to SGS-3. As to expression, salivary gland specific.

Its subcellular location is the secreted. This Drosophila melanogaster (Fruit fly) protein is Protein new-glue 2 (ng2).